The chain runs to 149 residues: Transcriptional regulator MraZ (149 aa).

2 SpoVT-AbrB domains span residues 6–52 and 81–124; these read RSHR…PYPD and AEEM…DQSK.

It belongs to the MraZ family. In terms of assembly, forms oligomers.

It is found in the cytoplasm. Its subcellular location is the nucleoid. The chain is Transcriptional regulator MraZ from Nitratidesulfovibrio vulgaris (strain ATCC 29579 / DSM 644 / CCUG 34227 / NCIMB 8303 / VKM B-1760 / Hildenborough) (Desulfovibrio vulgaris).